Here is a 138-residue protein sequence, read N- to C-terminus: Small ribosomal subunit protein uS11c (138 aa).

The interval 1-21 is disordered; sequence MAKSIPKIGSRKTGRIGSRKH. The segment covering 9-21 has biased composition (basic residues); sequence GSRKTGRIGSRKH.

It belongs to the universal ribosomal protein uS11 family. As to quaternary structure, part of the 30S ribosomal subunit.

The protein resides in the plastid. It localises to the chloroplast. This chain is Small ribosomal subunit protein uS11c, found in Pisum sativum (Garden pea).